The primary structure comprises 951 residues: UvrABC system protein A (951 aa).

Glycine 33–serine 40 provides a ligand contact to ATP. The C4-type zinc-finger motif lies at cysteine 252 to cysteine 279. ABC transporter domains follow at residues tryptophan 309 to leucine 587 and glycine 607 to lysine 935. Glycine 639–serine 646 contacts ATP. Residues cysteine 738–cysteine 764 form a C4-type zinc finger.

Belongs to the ABC transporter superfamily. UvrA family. Forms a heterotetramer with UvrB during the search for lesions.

It localises to the cytoplasm. Its function is as follows. The UvrABC repair system catalyzes the recognition and processing of DNA lesions. UvrA is an ATPase and a DNA-binding protein. A damage recognition complex composed of 2 UvrA and 2 UvrB subunits scans DNA for abnormalities. When the presence of a lesion has been verified by UvrB, the UvrA molecules dissociate. The polypeptide is UvrABC system protein A (Lactiplantibacillus plantarum (strain ATCC BAA-793 / NCIMB 8826 / WCFS1) (Lactobacillus plantarum)).